The chain runs to 201 residues: Small ribosomal subunit protein uS4c (201 aa).

Residues L15–Q43 are disordered. One can recognise an S4 RNA-binding domain in the interval M89 to N150.

It belongs to the universal ribosomal protein uS4 family. Part of the 30S ribosomal subunit. Contacts protein S5. The interaction surface between S4 and S5 is involved in control of translational fidelity.

The protein resides in the plastid. The protein localises to the chloroplast. Functionally, one of the primary rRNA binding proteins, it binds directly to 16S rRNA where it nucleates assembly of the body of the 30S subunit. With S5 and S12 plays an important role in translational accuracy. This Sorghum bicolor (Sorghum) protein is Small ribosomal subunit protein uS4c (rps4).